The following is a 256-amino-acid chain: Biosynthetic peptidoglycan transglycosylase (256 aa).

A helical transmembrane segment spans residues 26–48; sequence VARWLAYVGGVFAGAWLATQLYY.

The protein belongs to the glycosyltransferase 51 family.

It is found in the cell inner membrane. The catalysed reaction is [GlcNAc-(1-&gt;4)-Mur2Ac(oyl-L-Ala-gamma-D-Glu-L-Lys-D-Ala-D-Ala)](n)-di-trans,octa-cis-undecaprenyl diphosphate + beta-D-GlcNAc-(1-&gt;4)-Mur2Ac(oyl-L-Ala-gamma-D-Glu-L-Lys-D-Ala-D-Ala)-di-trans,octa-cis-undecaprenyl diphosphate = [GlcNAc-(1-&gt;4)-Mur2Ac(oyl-L-Ala-gamma-D-Glu-L-Lys-D-Ala-D-Ala)](n+1)-di-trans,octa-cis-undecaprenyl diphosphate + di-trans,octa-cis-undecaprenyl diphosphate + H(+). Its pathway is cell wall biogenesis; peptidoglycan biosynthesis. Functionally, peptidoglycan polymerase that catalyzes glycan chain elongation from lipid-linked precursors. In Burkholderia pseudomallei (strain K96243), this protein is Biosynthetic peptidoglycan transglycosylase.